Reading from the N-terminus, the 464-residue chain is Argininosuccinate lyase (464 aa).

This sequence belongs to the lyase 1 family. Argininosuccinate lyase subfamily.

The protein localises to the cytoplasm. The catalysed reaction is 2-(N(omega)-L-arginino)succinate = fumarate + L-arginine. The protein operates within amino-acid biosynthesis; L-arginine biosynthesis; L-arginine from L-ornithine and carbamoyl phosphate: step 3/3. The protein is Argininosuccinate lyase of Streptococcus suis (strain 98HAH33).